Here is a 150-residue protein sequence, read N- to C-terminus: Avidin-related protein 6 (150 aa).

Positions 1–24 are cleaved as a signal peptide; the sequence is MVHATSPLLLLLLLSLALVAPGLS. One can recognise an Avidin-like domain in the interval 26–147; it reads RKCSLTGEWD…GYNNFTRQRT (122 aa). A disulfide bridge connects residues cysteine 28 and cysteine 105. Positions 36 and 40 each coordinate biotin. A glycan (N-linked (GlcNAc...) asparagine) is linked at asparagine 54. 3 residues coordinate biotin: tyrosine 57, threonine 59, and aspartate 63. Asparagine 93 carries N-linked (GlcNAc...) asparagine glycosylation. 3 residues coordinate biotin: serine 95, serine 99, and asparagine 140. N-linked (GlcNAc...) asparagine glycosylation is present at asparagine 141.

Belongs to the avidin/streptavidin family. As to quaternary structure, homotetramer. Post-translationally, glycosylated.

The protein resides in the secreted. Forms a strong non-covalent specific complex with biotin. The sequence is that of Avidin-related protein 6 (AVR6) from Gallus gallus (Chicken).